Consider the following 242-residue polypeptide: Biosynthetic peptidoglycan transglycosylase (242 aa).

The helical transmembrane segment at 19-39 (ILAALAVFWGGGIALFSVVPV) threads the bilayer.

It belongs to the glycosyltransferase 51 family.

The protein localises to the cell inner membrane. The catalysed reaction is [GlcNAc-(1-&gt;4)-Mur2Ac(oyl-L-Ala-gamma-D-Glu-L-Lys-D-Ala-D-Ala)](n)-di-trans,octa-cis-undecaprenyl diphosphate + beta-D-GlcNAc-(1-&gt;4)-Mur2Ac(oyl-L-Ala-gamma-D-Glu-L-Lys-D-Ala-D-Ala)-di-trans,octa-cis-undecaprenyl diphosphate = [GlcNAc-(1-&gt;4)-Mur2Ac(oyl-L-Ala-gamma-D-Glu-L-Lys-D-Ala-D-Ala)](n+1)-di-trans,octa-cis-undecaprenyl diphosphate + di-trans,octa-cis-undecaprenyl diphosphate + H(+). It participates in cell wall biogenesis; peptidoglycan biosynthesis. In terms of biological role, peptidoglycan polymerase that catalyzes glycan chain elongation from lipid-linked precursors. The sequence is that of Biosynthetic peptidoglycan transglycosylase from Salmonella choleraesuis (strain SC-B67).